Reading from the N-terminus, the 218-residue chain is 3-dehydroquinate dehydratase (218 aa).

Residues 29-31 (EFR) and Arg56 contribute to the 3-dehydroquinate site. The active-site Proton donor/acceptor is His116. The active-site Schiff-base intermediate with substrate is Lys142. 3-dehydroquinate contacts are provided by Arg180, Ser200, and Gln204.

Belongs to the type-I 3-dehydroquinase family. Homodimer.

It catalyses the reaction 3-dehydroquinate = 3-dehydroshikimate + H2O. The protein operates within metabolic intermediate biosynthesis; chorismate biosynthesis; chorismate from D-erythrose 4-phosphate and phosphoenolpyruvate: step 3/7. Functionally, involved in the third step of the chorismate pathway, which leads to the biosynthesis of aromatic amino acids. Catalyzes the cis-dehydration of 3-dehydroquinate (DHQ) and introduces the first double bond of the aromatic ring to yield 3-dehydroshikimate. The sequence is that of 3-dehydroquinate dehydratase from Methanococcus maripaludis (strain C7 / ATCC BAA-1331).